A 76-amino-acid chain; its full sequence is Gas vesicle protein A1 (76 aa).

Binds to GvpF1 stretches follow at residues 1–22 (MAQP…KGVV) and 2–43 (AQPD…EARV). Residues 9–19 (LAEVLDRVLDK) form an alpha helix 1 region. A beta-strand 1 region spans residues 23–31 (VDVWARVSL). The interval 32 to 34 (VGI) is beta turn. A beta-strand 2 region spans residues 35 to 43 (EILTVEARV). Residues 48 to 67 (VDTFLHYAEEIAKIEQAELT) form an alpha helix 2 region.

Belongs to the gas vesicle GvpA family. Major component of the gas vesicle shell which is 2 nm thick and consists of a single layer of the protein. It forms 4.6 nm-wide ribs nearly perpendicular to the long axis of the vesicle. Modeled as antiparallel homodimers. The ribs form a low-pitch helix rather than a stack of hoops. Interacts with GvpF1 via its N-terminus (residues 1-43) in early growth stages, none of the other GvpG1 to GvpM1 proteins were seen to directly bind GvpA1 in H.volcanii experiments. Might interact with GvpJ1. Might interact with GvpG1, GvpH1, GvpJ1, GvpM1, GvpN1 and GvpO1.

It localises to the gas vesicle shell. Functionally, gas vesicles are hollow, gas filled proteinaceous nanostructures found in several microbial planktonic microorganisms. They allow positioning of halobacteria at the optimal depth for growth in the poorly aerated shallow brine pools of their habitat. GvpA forms the protein shell. The critical collapse pressure (CCP) of p-vac gas vesicles is 0.66 MPa; mutating residues in p-gvpA to those found in c-gvpA increases the CCP. These residues partially and independently control the width and strength of gas vesicles. In stationary phase gas vesicles, about 30 times more GvpA1 is found than GvpA2. In terms of biological role, expression of a 9.5 kb p-vac DNA fragment containing 2 divergently transcribed regions (gvpD-gvpE-gvpF-gvpG-gvpH-gvpI-gvpJ-gvpK-gvpL-gvpM and gvpA-gvpC-gvpN-gvpO) allows H.volcanii to produce gas vesicles. All site-directed mutagenesis is tested in H.volcanii. A minimal gas vesicle can be made in H.volcanii by gvpA1-gvpO1 plus gvpF1-gvpG1-gvpJ1-gvpK1-gvpL1-gvpM1; lack of enough GvpJ1 prevents their formation. A similar region restores gas vesicle production in H.halobium without the p-vac locus, but it still has the c-vac locus. The polypeptide is Gas vesicle protein A1 (Halobacterium salinarum (strain ATCC 700922 / JCM 11081 / NRC-1) (Halobacterium halobium)).